The primary structure comprises 128 residues: MNPTQAGSFTTPVSNALKATIQHHDSAVIIHARGEIDAANEHTWQDLVTKAAAATTAPEPLVVNLNGLDFMGCCAVAVLAHEAERCRRRGVDVRLVSRDRAVARIIHACGYGDVLPVHPTTESALSAT.

Residues 17–128 (LKATIQHHDS…PTTESALSAT (112 aa)) enclose the STAS domain. The cysteines at positions 73 and 109 are disulfide-linked.

It belongs to the anti-sigma-factor antagonist family. In terms of assembly, monomer. Interacts with anti-sigma-F factor RsbW (UsfX).

Its function is as follows. Positive, redox-sensitive regulator of sigma-F (SigF) activity. When reduced binds to anti-sigma-F factor RsbW (UsfX) preventing its binding to SigF, thus activating transcription. This Mycobacterium tuberculosis (strain CDC 1551 / Oshkosh) protein is Anti-sigma-F factor antagonist RsfA (rsfA).